The sequence spans 413 residues: MNIYAVGGAIRDALLGVPVQDRDYVVVGATPEQMAAQGFRPVGKDFPVFLHPDTQEEYALARTERKTAAGYHGFQFYYAPDVTLDEDLARRDLTINAMAREVSPDGTLIGPVIDPFDGQADLRARVFRHVSDAFVEDPVRILRIARFAARFADFTVADETLALMRRMVDAGEADALVPERVWQEIARGLMEATPSRMFDVLRECGALARVLPEVDALWGVPQRADYHPEVDTGVHVMMVVDYAAKQGYSLPVRFAALTHDLGKATTPADVLPRHVGHEGRSVELIKPLCERLRVPNECRDLALVVAREHGNLHRVMEMGAAALVRLFERSDALRKPARFAEMLQACESDARGRLGLDTQPYPQAERLRVALVAARSVDAGAIARGIGNDAMQIKDAVHRARIDAVKQALAIAE.

Residues G8 and R11 each contribute to the ATP site. The CTP site is built by G8 and R11. The Mg(2+) site is built by D21 and D23. Residues R91, R143, and R146 each contribute to the ATP site. 3 residues coordinate CTP: R91, R143, and R146. Residues 232–333 enclose the HD domain; the sequence is TGVHVMMVVD…VRLFERSDAL (102 aa).

The protein belongs to the tRNA nucleotidyltransferase/poly(A) polymerase family. Bacterial CCA-adding enzyme type 1 subfamily. In terms of assembly, monomer. Can also form homodimers and oligomers. Mg(2+) serves as cofactor. It depends on Ni(2+) as a cofactor.

It catalyses the reaction a tRNA precursor + 2 CTP + ATP = a tRNA with a 3' CCA end + 3 diphosphate. The catalysed reaction is a tRNA with a 3' CCA end + 2 CTP + ATP = a tRNA with a 3' CCACCA end + 3 diphosphate. Catalyzes the addition and repair of the essential 3'-terminal CCA sequence in tRNAs without using a nucleic acid template. Adds these three nucleotides in the order of C, C, and A to the tRNA nucleotide-73, using CTP and ATP as substrates and producing inorganic pyrophosphate. tRNA 3'-terminal CCA addition is required both for tRNA processing and repair. Also involved in tRNA surveillance by mediating tandem CCA addition to generate a CCACCA at the 3' terminus of unstable tRNAs. While stable tRNAs receive only 3'-terminal CCA, unstable tRNAs are marked with CCACCA and rapidly degraded. This is Multifunctional CCA protein from Burkholderia vietnamiensis (strain G4 / LMG 22486) (Burkholderia cepacia (strain R1808)).